The sequence spans 201 residues: ATP-dependent Clp protease proteolytic subunit 2 (201 aa).

Residue serine 100 is the Nucleophile of the active site. Residue histidine 125 is part of the active site.

This sequence belongs to the peptidase S14 family. Fourteen ClpP subunits assemble into 2 heptameric rings which stack back to back to give a disk-like structure with a central cavity, resembling the structure of eukaryotic proteasomes.

The protein resides in the cytoplasm. It catalyses the reaction Hydrolysis of proteins to small peptides in the presence of ATP and magnesium. alpha-casein is the usual test substrate. In the absence of ATP, only oligopeptides shorter than five residues are hydrolyzed (such as succinyl-Leu-Tyr-|-NHMec, and Leu-Tyr-Leu-|-Tyr-Trp, in which cleavage of the -Tyr-|-Leu- and -Tyr-|-Trp bonds also occurs).. In terms of biological role, cleaves peptides in various proteins in a process that requires ATP hydrolysis. Has a chymotrypsin-like activity. Plays a major role in the degradation of misfolded proteins. The polypeptide is ATP-dependent Clp protease proteolytic subunit 2 (Corynebacterium glutamicum (strain ATCC 13032 / DSM 20300 / JCM 1318 / BCRC 11384 / CCUG 27702 / LMG 3730 / NBRC 12168 / NCIMB 10025 / NRRL B-2784 / 534)).